Here is a 146-residue protein sequence, read N- to C-terminus: Deoxyuridine 5'-triphosphate nucleotidohydrolase (146 aa).

Substrate is bound by residues 66 to 68 (RSG), Asn79, 83 to 85 (TVD), and Lys93.

This sequence belongs to the dUTPase family. It depends on Mg(2+) as a cofactor.

It catalyses the reaction dUTP + H2O = dUMP + diphosphate + H(+). The protein operates within pyrimidine metabolism; dUMP biosynthesis; dUMP from dCTP (dUTP route): step 2/2. Functionally, this enzyme is involved in nucleotide metabolism: it produces dUMP, the immediate precursor of thymidine nucleotides and it decreases the intracellular concentration of dUTP so that uracil cannot be incorporated into DNA. The sequence is that of Deoxyuridine 5'-triphosphate nucleotidohydrolase from Fusobacterium nucleatum subsp. nucleatum (strain ATCC 25586 / DSM 15643 / BCRC 10681 / CIP 101130 / JCM 8532 / KCTC 2640 / LMG 13131 / VPI 4355).